We begin with the raw amino-acid sequence, 388 residues long: tRNA(Ile)-lysidine synthase (388 aa).

Residue 51–56 (SGGRDS) coordinates ATP.

It belongs to the tRNA(Ile)-lysidine synthase family.

The protein localises to the cytoplasm. It catalyses the reaction cytidine(34) in tRNA(Ile2) + L-lysine + ATP = lysidine(34) in tRNA(Ile2) + AMP + diphosphate + H(+). Ligates lysine onto the cytidine present at position 34 of the AUA codon-specific tRNA(Ile) that contains the anticodon CAU, in an ATP-dependent manner. Cytidine is converted to lysidine, thus changing the amino acid specificity of the tRNA from methionine to isoleucine. The protein is tRNA(Ile)-lysidine synthase of Bifidobacterium longum subsp. infantis (strain ATCC 15697 / DSM 20088 / JCM 1222 / NCTC 11817 / S12).